Consider the following 341-residue polypeptide: Phosphoribosylformylglycinamidine cyclo-ligase (341 aa).

It belongs to the AIR synthase family.

The protein localises to the cytoplasm. The catalysed reaction is 2-formamido-N(1)-(5-O-phospho-beta-D-ribosyl)acetamidine + ATP = 5-amino-1-(5-phospho-beta-D-ribosyl)imidazole + ADP + phosphate + H(+). Its pathway is purine metabolism; IMP biosynthesis via de novo pathway; 5-amino-1-(5-phospho-D-ribosyl)imidazole from N(2)-formyl-N(1)-(5-phospho-D-ribosyl)glycinamide: step 2/2. The polypeptide is Phosphoribosylformylglycinamidine cyclo-ligase (Thermosynechococcus vestitus (strain NIES-2133 / IAM M-273 / BP-1)).